The chain runs to 263 residues: Protein maestro (263 aa).

Residues 1 to 21 (MDQTPRRMLGQPLSSPATQPK) form a disordered region. The HEAT repeat unit spans residues 128–163 (SFFIDITLQTRTLLDDENDSLRYSAFVLFGQLADLA).

The protein localises to the nucleus. Its subcellular location is the nucleolus. This chain is Protein maestro (MRO), found in Bos taurus (Bovine).